A 302-amino-acid polypeptide reads, in one-letter code: Glycine N-acyltransferase-like protein 1 (302 aa).

It belongs to the glycine N-acyltransferase family. In terms of tissue distribution, expressed in liver and kidney and, at lower levels, in pancreas, testis, ovary and stomach.

It carries out the reaction an acyl-CoA + L-glutamine = an N(2)-acyl-L-glutamine + CoA + H(+). Functionally, acyltransferase which transfers an acyl group to the N-terminus of glutamine. Can use phenylacetyl-CoA as an acyl donor. This chain is Glycine N-acyltransferase-like protein 1, found in Homo sapiens (Human).